Consider the following 231-residue polypeptide: Aquaporin Z (231 aa).

Transmembrane regions (helical) follow at residues 9 to 29 (CFGT…AAGF) and 34 to 54 (IGFA…AFAV). The short motif at 63 to 65 (NPA) is the NPA 1 element. 3 consecutive transmembrane segments (helical) span residues 82 to 102 (VGYV…LYLI), 129 to 149 (YSML…LLVI), and 156 to 176 (FAPA…IHLI). The NPA 2 signature appears at 186 to 188 (NPA). A helical transmembrane segment spans residues 202 to 222 (LEQLWFFWVVPIVGGIIGGLI).

It belongs to the MIP/aquaporin (TC 1.A.8) family. In terms of assembly, homotetramer.

It is found in the cell inner membrane. The catalysed reaction is H2O(in) = H2O(out). Its function is as follows. Channel that permits osmotically driven movement of water in both directions. It is involved in the osmoregulation and in the maintenance of cell turgor during volume expansion in rapidly growing cells. It mediates rapid entry or exit of water in response to abrupt changes in osmolarity. This chain is Aquaporin Z, found in Escherichia coli O157:H7.